The following is a 282-amino-acid chain: MATYLIGDVHGCYDELIALLHKVEFTPGKDTLWLTGDLVARGPGSLDVLRYVKSLGDSVRLVLGNHDLHLLAVFAGISRNKPKDRLTPLLEAPDADELLNWLRRQPLLQIDEEKKLVMAHAGITPQWDLQTAKECARDVEAVLSSDSYPFFLDAMYGDMPNNWSPELRGLGRLRFITNAFTRMRFCFPNGQLDMYSKESPEEAPAPLKPWFAIPGPVAEEYSIAFGHWASLEGKGTPEGIYALDTGCCWGGSLTCLRWEDKQYFVQPSNRHKDLGEGEAVAS.

The protein belongs to the Ap4A hydrolase family. In terms of assembly, monomer.

The enzyme catalyses P(1),P(4)-bis(5'-adenosyl) tetraphosphate + H2O = 2 ADP + 2 H(+). In terms of biological role, hydrolyzes diadenosine 5',5'''-P1,P4-tetraphosphate to yield ADP. This is Bis(5'-nucleosyl)-tetraphosphatase, symmetrical from Escherichia coli O157:H7.